The chain runs to 256 residues: Probable ABC transporter ATP-binding protein spyM18_0273 (256 aa).

The region spanning 4–246 (LEINNLHVSI…EKEGYAGIAQ (243 aa)) is the ABC transporter domain. An ATP-binding site is contributed by 36-43 (GPNGTGKS).

The protein belongs to the ABC transporter superfamily. Ycf16 family.

Its subcellular location is the cell membrane. The sequence is that of Probable ABC transporter ATP-binding protein spyM18_0273 from Streptococcus pyogenes serotype M18 (strain MGAS8232).